The primary structure comprises 137 residues: Small ribosomal subunit protein uS19 (137 aa).

Belongs to the universal ribosomal protein uS19 family.

Its function is as follows. Protein S19 forms a complex with S13 that binds strongly to the 16S ribosomal RNA. This is Small ribosomal subunit protein uS19 from Methanospirillum hungatei JF-1 (strain ATCC 27890 / DSM 864 / NBRC 100397 / JF-1).